The chain runs to 613 residues: MNSMLNFTHKRKSVSRLLAPVALAVILAGCSSSNQQQASASNITAIATDTSANYLIKAESSDGIESIDWNILALKALIKEGQWTQADNQSKRLSRMSLSPIQMAEWQLARATLRYQQGQLQEALNTLNFQPWWPLPDNQYKRYFMLRAELLGQLGQHSKAARQRTMLDQYLPSNQKNANWQNLWQDLSSYNNSQLQSVSLKEDETVLRGWIQLSILKNTYSQRPVRLKSAVDEWLSMNPYHPAHQYLPTELEAIMSMEVAQLDNVALLLPLTGRFESQGKAVRDGFINAMLDDTSRDTDTELTVFDTEAESMTAIMAKLQANGTQFVIGPLRKEKVTAFQQSNTSQINLLALNQPEQLDVSQTQSCYFSLSPEQEAEQAAQHLFAKGHQYPLVLAPKSKFGQRMTDAFNEQWQQLTGRNADIDTFGSRKQIQQQISRIFGLNDSQARISQMNQLTGVKLESQQRSRRDTDAVYLIANKSELTLLKPFIEVAINPEVKPPKLYASSRGNPNANSDNSELRGIEFSDIPLIINPELSFMERFDSLWPNESNTSIRLHAFGMDAYKMVNELPQLRVVDNYTVQGMTGQLGIDNQCVVQREMDWAVFTSDGITPAAE.

A signal peptide spans 1–29; that stretch reads MNSMLNFTHKRKSVSRLLAPVALAVILAG. Cys-30 is lipidated: N-palmitoyl cysteine. Cys-30 is lipidated: S-diacylglycerol cysteine.

This sequence belongs to the LpoA family. Interacts with PBP1a.

The protein resides in the cell outer membrane. Functionally, regulator of peptidoglycan synthesis that is essential for the function of penicillin-binding protein 1A (PBP1a). The polypeptide is Penicillin-binding protein activator LpoA (Photobacterium profundum (strain SS9)).